We begin with the raw amino-acid sequence, 295 residues long: Acetylglutamate kinase (295 aa).

Residues 66-67, arginine 88, and asparagine 193 contribute to the substrate site; that span reads GG.

Belongs to the acetylglutamate kinase family. ArgB subfamily.

It localises to the cytoplasm. The catalysed reaction is N-acetyl-L-glutamate + ATP = N-acetyl-L-glutamyl 5-phosphate + ADP. The protein operates within amino-acid biosynthesis; L-arginine biosynthesis; N(2)-acetyl-L-ornithine from L-glutamate: step 2/4. Its function is as follows. Catalyzes the ATP-dependent phosphorylation of N-acetyl-L-glutamate. The polypeptide is Acetylglutamate kinase (Rhizobium johnstonii (strain DSM 114642 / LMG 32736 / 3841) (Rhizobium leguminosarum bv. viciae)).